A 308-amino-acid chain; its full sequence is Ribosomal protein L11 methyltransferase (308 aa).

Threonine 148, glycine 169, aspartate 191, and asparagine 239 together coordinate S-adenosyl-L-methionine.

It belongs to the methyltransferase superfamily. PrmA family.

Its subcellular location is the cytoplasm. It carries out the reaction L-lysyl-[protein] + 3 S-adenosyl-L-methionine = N(6),N(6),N(6)-trimethyl-L-lysyl-[protein] + 3 S-adenosyl-L-homocysteine + 3 H(+). Functionally, methylates ribosomal protein L11. The polypeptide is Ribosomal protein L11 methyltransferase (Psychrobacter arcticus (strain DSM 17307 / VKM B-2377 / 273-4)).